Consider the following 288-residue polypeptide: Phospholipid phosphatase 2 (288 aa).

At Met-1 to Arg-4 the chain is on the cytoplasmic side. Residues Trp-5–Leu-25 traverse the membrane as a helical segment. Residues Thr-26 to Thr-51 lie on the Lumenal side of the membrane. Residues Ile-52–Gly-72 form a helical membrane-spanning segment. The Cytoplasmic segment spans residues Glu-73–Asp-87. Residues Phe-88 to Val-108 form a helical membrane-spanning segment. Residues Ser-109–Leu-162 are Lumenal-facing. Residues Lys-117–Pro-125 are phosphatase sequence motif I. N-linked (GlcNAc...) asparagine glycosylation is present at Asn-139. A helical membrane pass occupies residues Ser-163–Val-183. A phosphatase sequence motif II region spans residues Tyr-165 to His-168. The active-site Proton donors is the His-168. Residues Gln-184–Arg-196 lie on the Cytoplasmic side of the membrane. Residues Pro-197–Asp-217 traverse the membrane as a helical segment. The interval Thr-213 to Asp-224 is phosphatase sequence motif III. Topologically, residues Tyr-218–Leu-226 are lumenal. His-220 functions as the Nucleophile in the catalytic mechanism. A helical transmembrane segment spans residues Val-227 to Phe-247. Over Lys-248–Ser-288 the chain is Cytoplasmic.

It belongs to the PA-phosphatase related phosphoesterase family. Forms functional homodimers and homooligomers. Can also form heterooligomers with PLPP1 and PLPP3. N-glycosylated. In terms of tissue distribution, found mainly in brain, pancreas and placenta.

The protein localises to the membrane. Its subcellular location is the cell membrane. It localises to the early endosome membrane. The protein resides in the endoplasmic reticulum membrane. The catalysed reaction is a 1,2-diacyl-sn-glycero-3-phosphate + H2O = a 1,2-diacyl-sn-glycerol + phosphate. The enzyme catalyses 1,2-dihexadecanoyl-sn-glycero-3-phosphate + H2O = 1,2-dihexadecanoyl-sn-glycerol + phosphate. It carries out the reaction 1,2-di-(9Z-octadecenoyl)-sn-glycero-3-phosphate + H2O = 1,2-di-(9Z-octadecenoyl)-sn-glycerol + phosphate. It catalyses the reaction a monoacyl-sn-glycero-3-phosphate + H2O = a monoacylglycerol + phosphate. The catalysed reaction is (9Z)-octadecenoyl-sn-glycero-3-phosphate + H2O = (9Z-octadecenoyl)-glycerol + phosphate. The enzyme catalyses sphing-4-enine 1-phosphate + H2O = sphing-4-enine + phosphate. It carries out the reaction an N-acylsphing-4-enine 1-phosphate + H2O = an N-acylsphing-4-enine + phosphate. It catalyses the reaction N-(octanoyl)-sphing-4-enine-1-phosphate + H2O = N-octanoylsphing-4-enine + phosphate. The catalysed reaction is N-(9Z-octadecenoyl)-ethanolamine phosphate + H2O = N-(9Z-octadecenoyl) ethanolamine + phosphate. Its pathway is lipid metabolism; phospholipid metabolism. Magnesium-independent phospholipid phosphatase. Insensitive to N-ethylmaleimide. Inhibited by sphingosine, zinc ions and modestly by propanolol. Functionally, magnesium-independent phospholipid phosphatase that catalyzes the dephosphorylation of a variety of glycerolipid and sphingolipid phosphate esters including phosphatidate/PA, lysophosphatidate/LPA, sphingosine 1-phosphate/S1P and ceramide 1-phosphate/C1P. Has no apparent extracellular phosphatase activity and therefore most probably acts intracellularly. Also acts on N-oleoyl ethanolamine phosphate/N-(9Z-octadecenoyl)-ethanolamine phosphate, a potential physiological compound. Through dephosphorylation of these bioactive lipid mediators produces new bioactive compounds and may regulate signal transduction in different cellular processes. Indirectly regulates, for instance, cell cycle G1/S phase transition through its phospholipid phosphatase activity. The protein is Phospholipid phosphatase 2 of Homo sapiens (Human).